Here is a 143-residue protein sequence, read N- to C-terminus: ATP synthase subunit b' (143 aa).

Residues 6–26 form a helical membrane-spanning segment; it reads ATLPLMALQFLVLAVVLNAVF.

Belongs to the ATPase B chain family. As to quaternary structure, F-type ATPases have 2 components, F(1) - the catalytic core - and F(0) - the membrane proton channel. F(1) has five subunits: alpha(3), beta(3), gamma(1), delta(1), epsilon(1). F(0) has four main subunits: a(1), b(1), b'(1) and c(10-14). The alpha and beta chains form an alternating ring which encloses part of the gamma chain. F(1) is attached to F(0) by a central stalk formed by the gamma and epsilon chains, while a peripheral stalk is formed by the delta, b and b' chains.

It is found in the cellular thylakoid membrane. In terms of biological role, f(1)F(0) ATP synthase produces ATP from ADP in the presence of a proton or sodium gradient. F-type ATPases consist of two structural domains, F(1) containing the extramembraneous catalytic core and F(0) containing the membrane proton channel, linked together by a central stalk and a peripheral stalk. During catalysis, ATP synthesis in the catalytic domain of F(1) is coupled via a rotary mechanism of the central stalk subunits to proton translocation. Its function is as follows. Component of the F(0) channel, it forms part of the peripheral stalk, linking F(1) to F(0). The b'-subunit is a diverged and duplicated form of b found in plants and photosynthetic bacteria. This Gloeothece citriformis (strain PCC 7424) (Cyanothece sp. (strain PCC 7424)) protein is ATP synthase subunit b'.